A 222-amino-acid chain; its full sequence is Triosephosphate isomerase (222 aa).

Residue 9–11 participates in substrate binding; it reads NYK. Catalysis depends on H93, which acts as the Electrophile. E141 serves as the catalytic Proton acceptor. Residues I146, G181, and 202–203 each bind substrate; that span reads AS.

The protein belongs to the triosephosphate isomerase family. Homotetramer; dimer of dimers.

The protein resides in the cytoplasm. It catalyses the reaction D-glyceraldehyde 3-phosphate = dihydroxyacetone phosphate. It participates in carbohydrate biosynthesis; gluconeogenesis. It functions in the pathway carbohydrate degradation; glycolysis; D-glyceraldehyde 3-phosphate from glycerone phosphate: step 1/1. In terms of biological role, involved in the gluconeogenesis. Catalyzes stereospecifically the conversion of dihydroxyacetone phosphate (DHAP) to D-glyceraldehyde-3-phosphate (G3P). This is Triosephosphate isomerase from Methanobrevibacter smithii (strain ATCC 35061 / DSM 861 / OCM 144 / PS).